An 89-amino-acid chain; its full sequence is DNA-directed RNA polymerase subunit omega (89 aa).

The protein belongs to the RNA polymerase subunit omega family. In terms of assembly, the RNAP catalytic core consists of 2 alpha, 1 beta, 1 beta' and 1 omega subunit. When a sigma factor is associated with the core the holoenzyme is formed, which can initiate transcription.

It catalyses the reaction RNA(n) + a ribonucleoside 5'-triphosphate = RNA(n+1) + diphosphate. Its function is as follows. Promotes RNA polymerase assembly. Latches the N- and C-terminal regions of the beta' subunit thereby facilitating its interaction with the beta and alpha subunits. In Pasteurella multocida (strain Pm70), this protein is DNA-directed RNA polymerase subunit omega (rpoZ).